A 159-amino-acid chain; its full sequence is Ribosomal RNA large subunit methyltransferase H (159 aa).

2 residues coordinate S-adenosyl-L-methionine: Leu76 and Gly108.

Belongs to the RNA methyltransferase RlmH family. Homodimer.

It is found in the cytoplasm. It catalyses the reaction pseudouridine(1915) in 23S rRNA + S-adenosyl-L-methionine = N(3)-methylpseudouridine(1915) in 23S rRNA + S-adenosyl-L-homocysteine + H(+). Its function is as follows. Specifically methylates the pseudouridine at position 1915 (m3Psi1915) in 23S rRNA. This Natranaerobius thermophilus (strain ATCC BAA-1301 / DSM 18059 / JW/NM-WN-LF) protein is Ribosomal RNA large subunit methyltransferase H.